The primary structure comprises 232 residues: Orotidine 5'-phosphate decarboxylase (232 aa).

Substrate-binding positions include D13, K35, D62–T71, T122, R182, Q191, G211, and R212. K64 (proton donor) is an active-site residue.

Belongs to the OMP decarboxylase family. Type 1 subfamily. Homodimer.

It catalyses the reaction orotidine 5'-phosphate + H(+) = UMP + CO2. Its pathway is pyrimidine metabolism; UMP biosynthesis via de novo pathway; UMP from orotate: step 2/2. Its function is as follows. Catalyzes the decarboxylation of orotidine 5'-monophosphate (OMP) to uridine 5'-monophosphate (UMP). The protein is Orotidine 5'-phosphate decarboxylase of Pseudomonas fluorescens (strain SBW25).